A 463-amino-acid chain; its full sequence is Putative WAS protein family homolog 3 (463 aa).

The tract at residues 1–54 (MTPVRMQHSLAGQTYAVPLIQPDLRREEAVQQMADALQYLQKVSGDIFSRISQQ) is required for WASH complex assembly. The segment at 1–165 (MTPVRMQHSL…EGLGGLPSNI (165 aa)) is WHD1. Lysine 218 is covalently cross-linked (Glycyl lysine isopeptide (Lys-Gly) (interchain with G-Cter in ubiquitin)). Positions 295–463 (QDGVLTPPPP…AEEDEDDWES (169 aa)) are disordered. Residues 300 to 312 (TPPPPPPPPPPAP) show a composition bias toward pro residues. Residues 347–463 (QGAPREVVDP…AEEDEDDWES (117 aa)) form a VCA region. A WH2 domain is found at 359–381 (GRATLLESIRQAGGIGKAKLRSM). Positions 380-396 (SMKERKLEKKQQKEQEQ) are enriched in basic and acidic residues. Gly residues predominate over residues 422-434 (SGKGPGAGEGPGG). The segment covering 454-463 (AEEDEDDWES) has biased composition (acidic residues).

It belongs to the WASH1 family. As to quaternary structure, component of the WASH core complex also described as WASH regulatory complex (SHRC) composed of WASH (WASHC1, WASH2P or WASH3P), WASHC2 (WASHC2A or WASHC2C), WASHC3, WASHC4 and WASHC5. The WASH core complex associates with the F-actin-capping protein dimer (formed by CAPZA1, CAPZA2 or CAPZA3 and CAPZB) in a transient or substoichiometric manner which was initially described as WASH complex. Interacts (via WHD1 region) with WASHC2C; the interaction is direct. Interacts with alpha-tubulin. Interacts with BECN1; WASHC1 and AMBRA1 can competitively interact with BECN1. Interacts with BLOC1S2; may associate with the BLOC-1 complex. Interacts with tubulin gamma chain (TUBG1 or TUBG2). Interacts with EXOC1, EXOC4, EXOC8; in MMP14-positive endosomes in breast tumor cells; indicative for an association with the exocyst complex.

The protein resides in the early endosome. It is found in the early endosome membrane. It localises to the recycling endosome membrane. Its subcellular location is the cell projection. The protein localises to the lamellipodium. The protein resides in the filopodium. It is found in the cytoplasmic vesicle. It localises to the autophagosome. Its subcellular location is the cytoplasm. The protein localises to the cytoskeleton. The protein resides in the microtubule organizing center. It is found in the centrosome. It localises to the centriole. Functionally, acts as a nucleation-promoting factor at the surface of endosomes, where it recruits and activates the Arp2/3 complex to induce actin polymerization, playing a key role in the fission of tubules that serve as transport intermediates during endosome sorting. Involved in endocytic trafficking of EGF. Involved in transferrin receptor recycling. Regulates the trafficking of endosomal alpha5beta1 integrin to the plasma membrane and involved in invasive cell migration. In T-cells involved in endosome-to-membrane recycling of receptors including T-cell receptor (TCR), CD28 and ITGAL; proposed to be implicated in T cell proliferation and effector function. In dendritic cells involved in endosome-to-membrane recycling of major histocompatibility complex (MHC) class II probably involving retromer and subsequently allowing antigen sampling, loading and presentation during T-cell activation. Involved in Arp2/3 complex-dependent actin assembly driving Salmonella typhimurium invasion independent of ruffling. Involved in the exocytosis of MMP14 leading to matrix remodeling during invasive migration and implicating late endosome-to-plasma membrane tubular connections and cooperation with the exocyst complex. Involved in negative regulation of autophagy independently from its role in endosomal sorting by inhibiting BECN1 ubiquitination to inactivate PIK3C3/Vps34 activity. The chain is Putative WAS protein family homolog 3 (WASH3P) from Homo sapiens (Human).